A 284-amino-acid chain; its full sequence is Bifunctional protein FolD (284 aa).

Residues 165 to 167, Ser-190, and Ile-231 each bind NADP(+); that span reads GRS.

This sequence belongs to the tetrahydrofolate dehydrogenase/cyclohydrolase family. As to quaternary structure, homodimer.

It catalyses the reaction (6R)-5,10-methylene-5,6,7,8-tetrahydrofolate + NADP(+) = (6R)-5,10-methenyltetrahydrofolate + NADPH. The enzyme catalyses (6R)-5,10-methenyltetrahydrofolate + H2O = (6R)-10-formyltetrahydrofolate + H(+). Its pathway is one-carbon metabolism; tetrahydrofolate interconversion. Catalyzes the oxidation of 5,10-methylenetetrahydrofolate to 5,10-methenyltetrahydrofolate and then the hydrolysis of 5,10-methenyltetrahydrofolate to 10-formyltetrahydrofolate. The polypeptide is Bifunctional protein FolD (Streptococcus thermophilus (strain CNRZ 1066)).